We begin with the raw amino-acid sequence, 358 residues long: Type II restriction enzyme SacI (358 aa).

It carries out the reaction Endonucleolytic cleavage of DNA to give specific double-stranded fragments with terminal 5'-phosphates.. A subtype P restriction enzyme that recognizes the double-stranded sequence 5'-GAGCTC-3' and cleaves after T-5. The polypeptide is Type II restriction enzyme SacI (Streptomyces achromogenes).